The chain runs to 428 residues: GTPase Obg (428 aa).

An Obg domain is found at 1–158 (MFIDEVIITV…IKVKLELKLL (158 aa)). The region spanning 159–330 (ADVALVGYPS…ILYKTYDMLS (172 aa)) is the OBG-type G domain. GTP-binding positions include 165–172 (GYPSVGKS), 190–194 (FTTLE), 212–215 (DIPG), 282–285 (NKMD), and 311–313 (SVL). Mg(2+) is bound by residues serine 172 and threonine 192. The region spanning 349–428 (ELKIEKEDFE…IADVEFEYFE (80 aa)) is the OCT domain.

Belongs to the TRAFAC class OBG-HflX-like GTPase superfamily. OBG GTPase family. As to quaternary structure, monomer. Mg(2+) is required as a cofactor.

It localises to the cytoplasm. An essential GTPase which binds GTP, GDP and possibly (p)ppGpp with moderate affinity, with high nucleotide exchange rates and a fairly low GTP hydrolysis rate. Plays a role in control of the cell cycle, stress response, ribosome biogenesis and in those bacteria that undergo differentiation, in morphogenesis control. The protein is GTPase Obg of Fusobacterium nucleatum subsp. nucleatum (strain ATCC 25586 / DSM 15643 / BCRC 10681 / CIP 101130 / JCM 8532 / KCTC 2640 / LMG 13131 / VPI 4355).